The chain runs to 149 residues: Nucleoside diphosphate kinase 1 (149 aa).

ATP-binding residues include K9, F57, R85, T91, R102, and N112. The active-site Pros-phosphohistidine intermediate is the H115.

In terms of assembly, homohexamer. It depends on Mg(2+) as a cofactor.

The enzyme catalyses a 2'-deoxyribonucleoside 5'-diphosphate + ATP = a 2'-deoxyribonucleoside 5'-triphosphate + ADP. It catalyses the reaction a ribonucleoside 5'-diphosphate + ATP = a ribonucleoside 5'-triphosphate + ADP. Functionally, major role in the synthesis of nucleoside triphosphates other than ATP. The ATP gamma phosphate is transferred to the NDP beta phosphate via a ping-pong mechanism, using a phosphorylated active-site intermediate. This NDK is microtubule-associated. The chain is Nucleoside diphosphate kinase 1 (NDKR) from Oryza sativa subsp. indica (Rice).